Reading from the N-terminus, the 139-residue chain is Peptide methionine sulfoxide reductase MsrB (139 aa).

The MsrB domain occupies Asp14–Glu137. Zn(2+)-binding residues include Cys53, Cys56, Cys102, and Cys105. Cys126 (nucleophile) is an active-site residue.

Belongs to the MsrB Met sulfoxide reductase family. Zn(2+) serves as cofactor.

The enzyme catalyses L-methionyl-[protein] + [thioredoxin]-disulfide + H2O = L-methionyl-(R)-S-oxide-[protein] + [thioredoxin]-dithiol. This Leifsonia xyli subsp. xyli (strain CTCB07) protein is Peptide methionine sulfoxide reductase MsrB.